The chain runs to 527 residues: MDNKFYVNTNGERNIWSTAAEENMTTAASSSQSQPPQMQSSKFHQPENHIHINDGFSSGAFDLQTLESSFRGLSFADSNVHQNGNPILPAHQYNQVFNGGGGSYGDGYLFPPSGSYHHYELKDLQRFNQNQQRLSYQNDYVNQSYRYDTIGGGNGMLNNSFLNGVPCASRNNVSDYYTNIFGYGVNNSWRSNEGCTYNQDQAASSMENGRGSYFSIATDRVWSKELEKTIFVGTKETIDMIFDGLIVGICELMVDPFGNDVVKLLIGKCSSEQIILIVDVVTRHISKFVNICFNPIGTLAIQVLLTSIHERANNQIPRIMDAISSVALQLTRNTNAKYVILACFRMFTSSQCRRLLEVVSQHCYQIAIDQNGCCLLQQCFDKERVPNHEIRQRLISEVIEHALKLCLNCHGNYVVQYVVELDNQHETDLLVNKLLRNYAHLARNKYGSHVVQKLLKLRGIDSKLIVVDLLRGIDTLLLDPFGNYVIQTAWFVSKEDVRQMLRYYIERNIRLMRCNKFGNKILEKLNI.

The interval 22 to 51 is disordered; that stretch reads ENMTTAASSSQSQPPQMQSSKFHQPENHIH. The segment covering 24–41 has biased composition (low complexity); that stretch reads MTTAASSSQSQPPQMQSS. The PUM-HD domain maps to 184–527; it reads GVNNSWRSNE…GNKILEKLNI (344 aa). 8 Pumilio repeats span residues 205–243, 244–279, 283–321, 322–357, 358–396, 397–432, 433–468, and 469–503; these read SMENGRGSYFSIATDRVWSKELEKTIFVGTKETIDMIFD, GLIVGICELMVDPFGNDVVKLLIGKCSSEQIILIVD, RHISKFVNICFNPIGTLAIQVLLTSIHERANNQIPRIMD, AISSVALQLTRNTNAKYVILACFRMFTSSQCRRLLE, VVSQHCYQIAIDQNGCCLLQQCFDKERVPNHEIRQRLIS, EVIEHALKLCLNCHGNYVVQYVVELDNQHETDLLVN, KLLRNYAHLARNKYGSHVVQKLLKLRGIDSKLIVVD, and LLRGIDTLLLDPFGNYVIQTAWFVSKEDVRQMLRY.

It localises to the cytoplasm. Functionally, sequence-specific RNA-binding protein that regulates translation and mRNA stability by binding the 3'-UTR of target mRNAs. In Arabidopsis thaliana (Mouse-ear cress), this protein is Putative pumilio homolog 13 (APUM13).